A 317-amino-acid chain; its full sequence is L-lactate dehydrogenase (317 aa).

NAD(+)-binding positions include Val17, Asp38, Lys43, and 82–83 (GA). Residues Gln85, Arg91, and 123-126 (NPVD) contribute to the substrate site. NAD(+) contacts are provided by residues 121–123 (VAN) and Ser146. 151–154 (DSAR) contributes to the substrate binding site. Beta-D-fructose 1,6-bisphosphate-binding residues include Arg156 and His171. The active-site Proton acceptor is the His178. Residue Tyr224 is modified to Phosphotyrosine. Residue Thr233 participates in substrate binding.

The protein belongs to the LDH/MDH superfamily. LDH family. In terms of assembly, homotetramer.

The protein resides in the cytoplasm. The catalysed reaction is (S)-lactate + NAD(+) = pyruvate + NADH + H(+). It functions in the pathway fermentation; pyruvate fermentation to lactate; (S)-lactate from pyruvate: step 1/1. Its activity is regulated as follows. Allosterically activated by fructose 1,6-bisphosphate (FBP). In terms of biological role, catalyzes the conversion of lactate to pyruvate. The chain is L-lactate dehydrogenase from Moorella thermoacetica (strain ATCC 39073 / JCM 9320).